Consider the following 307-residue polypeptide: Ribosomal RNA small subunit methyltransferase H (307 aa).

Residues glycine 33–tyrosine 35, aspartate 51, phenylalanine 78, aspartate 96, and glutamine 103 contribute to the S-adenosyl-L-methionine site.

This sequence belongs to the methyltransferase superfamily. RsmH family.

It localises to the cytoplasm. It catalyses the reaction cytidine(1402) in 16S rRNA + S-adenosyl-L-methionine = N(4)-methylcytidine(1402) in 16S rRNA + S-adenosyl-L-homocysteine + H(+). Its function is as follows. Specifically methylates the N4 position of cytidine in position 1402 (C1402) of 16S rRNA. The chain is Ribosomal RNA small subunit methyltransferase H from Rickettsia conorii (strain ATCC VR-613 / Malish 7).